Here is a 362-residue protein sequence, read N- to C-terminus: MSKIYNFNPGPAMLPKEVLLEIKKNFLNWNNSGFSITEISHRSSSFIEFTIQVEKDLRNLLHIPENYNILFSHGGARGQFSAIPMNLIKKFKKPDYINSGYWSKCAAKEAKKYCEPNIINVKRYTKNKQKYIESPINWKITSKHTYLHYCPNETIEGIEIFEEPILLNKIIIGDFSSTILSRKINIKKYGMIYACAQKNIGPAGITIIIIRNDLLISCKKKIPSILDYQLLFKSKSMLNTPSIFSWYVSGLVFKWIKNLGGLNVIEKKNIKKAKILYKYLNSTNFYYNCILPSNQSRMNVTFNLYKNELTNFFIQESEKSGLYGLKGHSIIGGLRASIYNAMPIEGVKKLIQFMKNFEKKFG.

Arg-42 is an L-glutamate binding site. Pyridoxal 5'-phosphate-binding positions include 76–77 (AR), Trp-102, Thr-154, Asp-174, and Gln-197. Position 198 is an N6-(pyridoxal phosphate)lysine (Lys-198). 239–240 (NT) provides a ligand contact to pyridoxal 5'-phosphate.

It belongs to the class-V pyridoxal-phosphate-dependent aminotransferase family. SerC subfamily. In terms of assembly, homodimer. It depends on pyridoxal 5'-phosphate as a cofactor.

The protein resides in the cytoplasm. The enzyme catalyses O-phospho-L-serine + 2-oxoglutarate = 3-phosphooxypyruvate + L-glutamate. It carries out the reaction 4-(phosphooxy)-L-threonine + 2-oxoglutarate = (R)-3-hydroxy-2-oxo-4-phosphooxybutanoate + L-glutamate. It participates in amino-acid biosynthesis; L-serine biosynthesis; L-serine from 3-phospho-D-glycerate: step 2/3. Its pathway is cofactor biosynthesis; pyridoxine 5'-phosphate biosynthesis; pyridoxine 5'-phosphate from D-erythrose 4-phosphate: step 3/5. Functionally, catalyzes the reversible conversion of 3-phosphohydroxypyruvate to phosphoserine and of 3-hydroxy-2-oxo-4-phosphonooxybutanoate to phosphohydroxythreonine. The protein is Phosphoserine aminotransferase of Buchnera aphidicola subsp. Cinara cedri (strain Cc).